A 458-amino-acid polypeptide reads, in one-letter code: Adenylosuccinate synthetase (458 aa).

GTP is bound by residues 11 to 17 and 39 to 41; these read GDEGKGG and GHT. The active-site Proton acceptor is Asp12. Residues Asp12 and Gly39 each contribute to the Mg(2+) site. IMP-binding positions include 12 to 15, 37 to 40, Thr127, Arg141, Gln232, Thr247, and Arg330; these read DEGK and NAGH. His40 (proton donor) is an active-site residue. 326 to 332 contacts substrate; it reads TVTGRPR. Residues Arg332, 358 to 360, and 443 to 445 each bind GTP; these read HLD and GVG.

Belongs to the adenylosuccinate synthetase family. Homodimer. Mg(2+) is required as a cofactor.

The protein resides in the cytoplasm. The catalysed reaction is IMP + L-aspartate + GTP = N(6)-(1,2-dicarboxyethyl)-AMP + GDP + phosphate + 2 H(+). It functions in the pathway purine metabolism; AMP biosynthesis via de novo pathway; AMP from IMP: step 1/2. Its function is as follows. Plays an important role in the de novo pathway of purine nucleotide biosynthesis. Catalyzes the first committed step in the biosynthesis of AMP from IMP. The sequence is that of Adenylosuccinate synthetase from Haloarcula marismortui (strain ATCC 43049 / DSM 3752 / JCM 8966 / VKM B-1809) (Halobacterium marismortui).